A 494-amino-acid chain; its full sequence is MQVIETLAEGLKREIKVVIPAKDMEDKMNERLADVKDKIRINGFRPGKVPAAHLKKVYGKSIMADLVNEIVREQPAAILSSRGEKSATQPEIAMTEDKDEADKILTAQQDFEFTLSYEVLPPIELKSVKGIKVTREVIDISDDEVNEQVLKVAESARSYESKTGKAANGDRITMDYVGKVDDEAFEGGTDQGAELVIGSGRFIPGFEDQLVGVKAGEEKTITVTFPADYPAKNLAGKEATFDVTVKDVAAPGAVEINDELASKLGIESADRLKEIVRGQIESQYGSLTRQKLKRQILDQLDEMYKFDTPASLVDAEYNGIWSQVNNDLAQSGKTFEDEDTTEEKAREEYKTLAERRVRLGLVLSEIGEKAGVEVTEDEMQRAIYDQLRQYPGQEKQILEFFRSQPGAAASIRAPIFEEKVIDHLLTEIDVTDKKVTKEELLAEDEGEAKAETKKAAPKKKAAAKSEAAEAGEGEEAAPKKKAAPKKKASEDSAE.

In terms of domain architecture, PPIase FKBP-type spans 169-254 (GDRITMDYVG…VKDVAAPGAV (86 aa)). The segment at 440–494 (LLAEDEGEAKAETKKAAPKKKAAAKSEAAEAGEGEEAAPKKKAAPKKKASEDSAE) is disordered.

The protein belongs to the FKBP-type PPIase family. Tig subfamily.

It localises to the cytoplasm. The enzyme catalyses [protein]-peptidylproline (omega=180) = [protein]-peptidylproline (omega=0). Its function is as follows. Involved in protein export. Acts as a chaperone by maintaining the newly synthesized protein in an open conformation. Functions as a peptidyl-prolyl cis-trans isomerase. The chain is Trigger factor from Rhizobium etli (strain ATCC 51251 / DSM 11541 / JCM 21823 / NBRC 15573 / CFN 42).